The sequence spans 349 residues: Core protein VP7 (349 aa).

Asn45 carries an N-linked (GlcNAc...) asparagine; by host glycan.

This sequence belongs to the orbivirus VP7 family. As to quaternary structure, homotrimer.

It is found in the virion. Major structural core protein; binds to structural protein VP3. Constitutes the surface of the AHSV core. This chain is Core protein VP7 (Segment-7), found in Camelus dromedarius (Dromedary).